A 499-amino-acid chain; its full sequence is Interferon regulatory factor 5 (499 aa).

Residues 12 to 18 (PRRVRLK) carry the Nuclear localization signal motif. Residues 14–122 (RVRLKPWLVA…QPYKVYEVCS (109 aa)) constitute a DNA-binding region (IRF tryptophan pentad repeat). Residues 121 to 142 (CSNGPAPAESQPSEDNAEEEEE) are disordered. The Nuclear export signal motif lies at 145–155 (LQKMLPGLSIT). Phosphoserine; by TBK1 occurs at positions 153 and 294. A Phosphoserine modification is found at serine 302. Residues lysine 412 and lysine 413 each participate in a glycyl lysine isopeptide (Lys-Gly) (interchain with G-Cter in ubiquitin) cross-link. Phosphoserine occurs at positions 432, 436, 438, 441, and 447.

This sequence belongs to the IRF family. As to quaternary structure, homodimer, when phosphorylated. Interacts with TASL (via pLxIS motif); interaction takes place downstream of TLR7, TLR8 or TLR9, leading to its activation. Interacts with MYD88 and TRAF6. Phosphorylation of serine and threonine residues by IKBKB in a C-terminal autoinhibitory region, stimulates dimerization, transport into the nucleus, assembly with the coactivator CBP/EP300 and initiation of transcription. In terms of processing, 'Lys-63'-linked polyubiquitination by TRAF6 is required for activation.

It is found in the cytoplasm. The protein resides in the nucleus. Its activity is regulated as follows. Maintained as a monomer in an autoinhibited state. Phosphorylation and activation follow the following steps: innate adapter protein TASL recruits IRF5, thereby licensing IRF5 for phosphorylation by IKBKB. Phosphorylated IRF5 dissociates from the adapter proteins, dimerizes, and then enters the nucleus to induce IFNs. In terms of biological role, transcription factor that plays a critical role in innate immunity by activating expression of type I interferon (IFN) IFNA and INFB and inflammatory cytokines downstream of endolysosomal toll-like receptors TLR7, TLR8 and TLR9. Regulates the transcription of type I IFN genes (IFN-alpha and IFN-beta) and IFN-stimulated genes (ISG) by binding to an interferon-stimulated response element (ISRE) in their promoters. Can efficiently activate both the IFN-beta (IFNB) and the IFN-alpha (IFNA) genes and mediate their induction downstream of the TLR-activated, MyD88-dependent pathway. This Bos taurus (Bovine) protein is Interferon regulatory factor 5.